The sequence spans 813 residues: Calpain-7 (813 aa).

Residue M1 is modified to N-acetylmethionine. T95 carries the post-translational modification Phosphothreonine. The 309-residue stretch at 232-540 (RERFAYPMPF…YDVIYLSWNP (309 aa)) folds into the Calpain catalytic domain. Active-site residues include C290, H458, and N478. A domain III region spans residues 541–701 (GLLKESTCIH…INGKWSGQSA (161 aa)). The tract at residues 702–813 (GGCGNFQETH…VIPIKTTQLQ (112 aa)) is domain N.

Belongs to the peptidase C2 family.

The protein localises to the nucleus. Its function is as follows. Calcium-regulated non-lysosomal thiol-protease. In Sus scrofa (Pig), this protein is Calpain-7 (CAPN7).